The primary structure comprises 861 residues: DNA mismatch repair protein MutS (861 aa).

ATP is bound at residue 618-625 (GPNMGGKS).

Belongs to the DNA mismatch repair MutS family.

Its function is as follows. This protein is involved in the repair of mismatches in DNA. It is possible that it carries out the mismatch recognition step. This protein has a weak ATPase activity. The protein is DNA mismatch repair protein MutS of Shewanella sp. (strain ANA-3).